The chain runs to 168 residues: 2-C-methyl-D-erythritol 2,4-cyclodiphosphate synthase (168 aa).

A divalent metal cation-binding residues include Asp11 and His13. 4-CDP-2-C-methyl-D-erythritol 2-phosphate contacts are provided by residues 11–13 and 41–42; these read DVH and HS. His49 provides a ligand contact to a divalent metal cation. 4-CDP-2-C-methyl-D-erythritol 2-phosphate-binding positions include 63-65, 68-72, 139-142, Phe146, and Arg149; these read DIG, FPDTD, and TTTE.

It belongs to the IspF family. As to quaternary structure, homotrimer. It depends on a divalent metal cation as a cofactor.

The catalysed reaction is 4-CDP-2-C-methyl-D-erythritol 2-phosphate = 2-C-methyl-D-erythritol 2,4-cyclic diphosphate + CMP. It participates in isoprenoid biosynthesis; isopentenyl diphosphate biosynthesis via DXP pathway; isopentenyl diphosphate from 1-deoxy-D-xylulose 5-phosphate: step 4/6. In terms of biological role, involved in the biosynthesis of isopentenyl diphosphate (IPP) and dimethylallyl diphosphate (DMAPP), two major building blocks of isoprenoid compounds. Catalyzes the conversion of 4-diphosphocytidyl-2-C-methyl-D-erythritol 2-phosphate (CDP-ME2P) to 2-C-methyl-D-erythritol 2,4-cyclodiphosphate (ME-CPP) with a corresponding release of cytidine 5-monophosphate (CMP). This chain is 2-C-methyl-D-erythritol 2,4-cyclodiphosphate synthase, found in Psychrobacter arcticus (strain DSM 17307 / VKM B-2377 / 273-4).